We begin with the raw amino-acid sequence, 498 residues long: Pyridine nucleotide-disulfide oxidoreductase domain-containing protein 1 (498 aa).

Position 1 is an N-acetylmethionine (methionine 1).

This sequence belongs to the class-I pyridine nucleotide-disulfide oxidoreductase family. PYROXD1 subfamily. FAD serves as cofactor.

Its subcellular location is the nucleus. It localises to the cytoplasm. It is found in the myofibril. The protein localises to the sarcomere. Functionally, probable FAD-dependent oxidoreductase; involved in the cellular oxidative stress response. Required for normal sarcomere structure and muscle fiber integrity. The polypeptide is Pyridine nucleotide-disulfide oxidoreductase domain-containing protein 1 (Pyroxd1) (Mus musculus (Mouse)).